The primary structure comprises 189 residues: Large ribosomal subunit protein uL5 (189 aa).

It belongs to the universal ribosomal protein uL5 family. In terms of assembly, part of the 50S ribosomal subunit; part of the 5S rRNA/L5/L18/L25 subcomplex. Contacts the 5S rRNA and the P site tRNA. Forms a bridge to the 30S subunit in the 70S ribosome.

This is one of the proteins that bind and probably mediate the attachment of the 5S RNA into the large ribosomal subunit, where it forms part of the central protuberance. In the 70S ribosome it contacts protein S13 of the 30S subunit (bridge B1b), connecting the 2 subunits; this bridge is implicated in subunit movement. Contacts the P site tRNA; the 5S rRNA and some of its associated proteins might help stabilize positioning of ribosome-bound tRNAs. The sequence is that of Large ribosomal subunit protein uL5 from Parafrankia sp. (strain EAN1pec).